Reading from the N-terminus, the 294-residue chain is Phosphoribosylaminoimidazole-succinocarboxamide synthase (294 aa).

This sequence belongs to the SAICAR synthetase family.

The enzyme catalyses 5-amino-1-(5-phospho-D-ribosyl)imidazole-4-carboxylate + L-aspartate + ATP = (2S)-2-[5-amino-1-(5-phospho-beta-D-ribosyl)imidazole-4-carboxamido]succinate + ADP + phosphate + 2 H(+). Its pathway is purine metabolism; IMP biosynthesis via de novo pathway; 5-amino-1-(5-phospho-D-ribosyl)imidazole-4-carboxamide from 5-amino-1-(5-phospho-D-ribosyl)imidazole-4-carboxylate: step 1/2. This Thermoplasma acidophilum (strain ATCC 25905 / DSM 1728 / JCM 9062 / NBRC 15155 / AMRC-C165) protein is Phosphoribosylaminoimidazole-succinocarboxamide synthase.